A 133-amino-acid chain; its full sequence is Large ribosomal subunit protein bL17 (133 aa).

It belongs to the bacterial ribosomal protein bL17 family. In terms of assembly, part of the 50S ribosomal subunit. Contacts protein L32.

This Idiomarina loihiensis (strain ATCC BAA-735 / DSM 15497 / L2-TR) protein is Large ribosomal subunit protein bL17.